The chain runs to 167 residues: uncharacterized protein (167 aa).

This is an uncharacterized protein from Pasteurella multocida (strain Pm70).